A 212-amino-acid chain; its full sequence is Imidazole glycerol phosphate synthase subunit HisH (212 aa).

The Glutamine amidotransferase type-1 domain maps to 2 to 212 (LTAIIDYESG…MIGNFLTWTP (211 aa)). The Nucleophile role is filled by C87. Residues H192 and E194 contribute to the active site.

Heterodimer of HisH and HisF.

It is found in the cytoplasm. The catalysed reaction is 5-[(5-phospho-1-deoxy-D-ribulos-1-ylimino)methylamino]-1-(5-phospho-beta-D-ribosyl)imidazole-4-carboxamide + L-glutamine = D-erythro-1-(imidazol-4-yl)glycerol 3-phosphate + 5-amino-1-(5-phospho-beta-D-ribosyl)imidazole-4-carboxamide + L-glutamate + H(+). The enzyme catalyses L-glutamine + H2O = L-glutamate + NH4(+). The protein operates within amino-acid biosynthesis; L-histidine biosynthesis; L-histidine from 5-phospho-alpha-D-ribose 1-diphosphate: step 5/9. IGPS catalyzes the conversion of PRFAR and glutamine to IGP, AICAR and glutamate. The HisH subunit catalyzes the hydrolysis of glutamine to glutamate and ammonia as part of the synthesis of IGP and AICAR. The resulting ammonia molecule is channeled to the active site of HisF. The protein is Imidazole glycerol phosphate synthase subunit HisH of Ruegeria pomeroyi (strain ATCC 700808 / DSM 15171 / DSS-3) (Silicibacter pomeroyi).